Here is an 85-residue protein sequence, read N- to C-terminus: Toxin Cll7 (85 aa).

The N-terminal stretch at 1–19 (MNSLLMITACLVLFGTVWA) is a signal peptide. Residues 20-83 (KEGYLVNTYT…TWPLPNKTCG (64 aa)) enclose the LCN-type CS-alpha/beta domain. 4 disulfides stabilise this stretch: C31/C82, C35/C58, C44/C63, and C48/C65.

Belongs to the long (4 C-C) scorpion toxin superfamily. Sodium channel inhibitor family. Beta subfamily. As to expression, expressed by the venom gland.

Its subcellular location is the secreted. Beta toxins bind voltage-independently at site-4 of sodium channels (Nav) and shift the voltage of activation toward more negative potentials thereby affecting sodium channel activation and promoting spontaneous and repetitive firing. The polypeptide is Toxin Cll7 (Centruroides limpidus (Mexican scorpion)).